Consider the following 92-residue polypeptide: Putative regulatory protein CTN_0877 (92 aa).

This sequence belongs to the RemA family.

In Thermotoga neapolitana (strain ATCC 49049 / DSM 4359 / NBRC 107923 / NS-E), this protein is Putative regulatory protein CTN_0877.